The primary structure comprises 136 residues: Large ribosomal subunit protein uL16 (136 aa).

Belongs to the universal ribosomal protein uL16 family. As to quaternary structure, part of the 50S ribosomal subunit.

Functionally, binds 23S rRNA and is also seen to make contacts with the A and possibly P site tRNAs. In Actinobacillus pleuropneumoniae serotype 5b (strain L20), this protein is Large ribosomal subunit protein uL16.